A 156-amino-acid chain; its full sequence is Ribosome maturation factor RimP (156 aa).

The protein belongs to the RimP family.

The protein resides in the cytoplasm. Required for maturation of 30S ribosomal subunits. The chain is Ribosome maturation factor RimP from Gloeobacter violaceus (strain ATCC 29082 / PCC 7421).